The sequence spans 628 residues: Probable potassium transport system protein Kup (628 aa).

Helical transmembrane passes span 12–32 (ALPL…IGTS), 57–77 (LLSL…VMLV), 106–126 (WYLL…GVLT), 141–161 (ISPA…AAVF), 174–194 (FYGP…VYGI), 219–239 (LAGV…ALYA), 253–273 (WLFV…AILL), 295–315 (LLFL…TGVF), 343–363 (IYVG…VLGF), 369–389 (LASA…ILFV), 402–422 (AVIA…SANL), and 425–445 (LHEG…VMVS).

Belongs to the HAK/KUP transporter (TC 2.A.72) family.

Its subcellular location is the cell inner membrane. It carries out the reaction K(+)(in) + H(+)(in) = K(+)(out) + H(+)(out). In terms of biological role, transport of potassium into the cell. Likely operates as a K(+):H(+) symporter. The protein is Probable potassium transport system protein Kup of Azorhizobium caulinodans (strain ATCC 43989 / DSM 5975 / JCM 20966 / LMG 6465 / NBRC 14845 / NCIMB 13405 / ORS 571).